Reading from the N-terminus, the 188-residue chain is Probable nicotinate-nucleotide adenylyltransferase (188 aa).

This sequence belongs to the NadD family.

The enzyme catalyses nicotinate beta-D-ribonucleotide + ATP + H(+) = deamido-NAD(+) + diphosphate. It functions in the pathway cofactor biosynthesis; NAD(+) biosynthesis; deamido-NAD(+) from nicotinate D-ribonucleotide: step 1/1. In terms of biological role, catalyzes the reversible adenylation of nicotinate mononucleotide (NaMN) to nicotinic acid adenine dinucleotide (NaAD). This Listeria monocytogenes serovar 1/2a (strain ATCC BAA-679 / EGD-e) protein is Probable nicotinate-nucleotide adenylyltransferase.